The chain runs to 644 residues: Threonine--tRNA ligase (644 aa).

Residues 1 to 61 form the TGS domain; it reads MPDIQLPDGS…DQDAEVAIVT (61 aa). Residues 242–535 are catalytic; that stretch reads DHRRIGTELE…LIEHYEGKFP (294 aa). Residues Cys-335, His-386, and His-512 each coordinate Zn(2+).

This sequence belongs to the class-II aminoacyl-tRNA synthetase family. As to quaternary structure, homodimer. It depends on Zn(2+) as a cofactor.

The protein localises to the cytoplasm. It catalyses the reaction tRNA(Thr) + L-threonine + ATP = L-threonyl-tRNA(Thr) + AMP + diphosphate + H(+). Catalyzes the attachment of threonine to tRNA(Thr) in a two-step reaction: L-threonine is first activated by ATP to form Thr-AMP and then transferred to the acceptor end of tRNA(Thr). Also edits incorrectly charged L-seryl-tRNA(Thr). In Acidithiobacillus ferrooxidans (strain ATCC 23270 / DSM 14882 / CIP 104768 / NCIMB 8455) (Ferrobacillus ferrooxidans (strain ATCC 23270)), this protein is Threonine--tRNA ligase.